Reading from the N-terminus, the 463-residue chain is ATP synthase subunit beta (463 aa).

An ATP-binding site is contributed by 152 to 159 (GGAGVGKT).

This sequence belongs to the ATPase alpha/beta chains family. In terms of assembly, F-type ATPases have 2 components, CF(1) - the catalytic core - and CF(0) - the membrane proton channel. CF(1) has five subunits: alpha(3), beta(3), gamma(1), delta(1), epsilon(1). CF(0) has three main subunits: a(1), b(2) and c(9-12). The alpha and beta chains form an alternating ring which encloses part of the gamma chain. CF(1) is attached to CF(0) by a central stalk formed by the gamma and epsilon chains, while a peripheral stalk is formed by the delta and b chains.

The protein resides in the cell membrane. It catalyses the reaction ATP + H2O + 4 H(+)(in) = ADP + phosphate + 5 H(+)(out). In terms of biological role, produces ATP from ADP in the presence of a proton gradient across the membrane. The catalytic sites are hosted primarily by the beta subunits. In Clostridium botulinum (strain Eklund 17B / Type B), this protein is ATP synthase subunit beta.